Reading from the N-terminus, the 305-residue chain is Ornithine carbamoyltransferase (305 aa).

Carbamoyl phosphate contacts are provided by residues 52-55 (STRT), glutamine 79, arginine 103, and 130-133 (HPLQ). Residues asparagine 162, aspartate 224, and 228-229 (SM) each bind L-ornithine. Carbamoyl phosphate is bound by residues 264 to 265 (CL) and arginine 292.

Belongs to the aspartate/ornithine carbamoyltransferase superfamily. OTCase family.

It localises to the cytoplasm. The enzyme catalyses carbamoyl phosphate + L-ornithine = L-citrulline + phosphate + H(+). Its pathway is amino-acid biosynthesis; L-arginine biosynthesis; L-arginine from L-ornithine and carbamoyl phosphate: step 1/3. Its function is as follows. Reversibly catalyzes the transfer of the carbamoyl group from carbamoyl phosphate (CP) to the N(epsilon) atom of ornithine (ORN) to produce L-citrulline. The polypeptide is Ornithine carbamoyltransferase (Pyrobaculum islandicum (strain DSM 4184 / JCM 9189 / GEO3)).